The chain runs to 63 residues: ATP synthase membrane subunit K, mitochondrial (63 aa).

A helical membrane pass occupies residues 15–37; sequence TMRGRANVAKATWASLGLVYVLV.

In terms of assembly, F-type ATPases have 2 components, CF(1) - the catalytic core - and CF(0) - the membrane proton channel. CF(1) has five subunits: alpha(3), beta(3), gamma(1), delta(1), epsilon(1). CF(0) has three main subunits: a, b and c. The ATP synthase complex/complex V exists as a monomeric and a dimeric supercomplex that helps shape mitochondrial cristae to optimize proton flow.

It localises to the mitochondrion membrane. In terms of biological role, mitochondrial membrane ATP synthase (F(1)F(0) ATP synthase or Complex V) produces ATP from ADP in the presence of a proton gradient across the membrane which is generated by electron transport complexes of the respiratory chain. F-type ATPases consist of two structural domains, F(1) - containing the extramembraneous catalytic core and F(0) - containing the membrane proton channel, linked together by a central stalk and a peripheral stalk. During catalysis, ATP synthesis in the catalytic domain of F(1) is coupled via a rotary mechanism of the central stalk subunits to proton translocation. ATP5MK is a minor subunit of the mitochondrial membrane ATP synthase required for dimerization of the ATP synthase complex and as such regulates ATP synthesis in the mitochondria. The chain is ATP synthase membrane subunit K, mitochondrial from Drosophila melanogaster (Fruit fly).